The primary structure comprises 153 residues: Putative transcription factor YdeB (153 aa).

Belongs to the CarD family.

This chain is Putative transcription factor YdeB (ydeB), found in Bacillus subtilis (strain 168).